The primary structure comprises 969 residues: RNA polymerase-associated protein RapA (969 aa).

The 171-residue stretch at 164–334 (EVGRRHAPRV…FARLRLLDAD (171 aa)) folds into the Helicase ATP-binding domain. 177–184 (DEVGLGKT) contributes to the ATP binding site. The DEAH box signature appears at 280-283 (DEAH). In terms of domain architecture, Helicase C-terminal spans 492–646 (RVNWLLEKVK…TCPTGRAVYD (155 aa)).

It belongs to the SNF2/RAD54 helicase family. RapA subfamily. Interacts with the RNAP. Has a higher affinity for the core RNAP than for the holoenzyme. Its ATPase activity is stimulated by binding to RNAP.

Transcription regulator that activates transcription by stimulating RNA polymerase (RNAP) recycling in case of stress conditions such as supercoiled DNA or high salt concentrations. Probably acts by releasing the RNAP, when it is trapped or immobilized on tightly supercoiled DNA. Does not activate transcription on linear DNA. Probably not involved in DNA repair. The polypeptide is RNA polymerase-associated protein RapA (Vibrio cholerae serotype O1 (strain ATCC 39315 / El Tor Inaba N16961)).